Reading from the N-terminus, the 272-residue chain is ATP synthase subunit a (272 aa).

A run of 6 helical transmembrane segments spans residues 41–61, 110–130, 143–165, 188–208, 222–242, and 243–263; these read VLNI…LSIF, FVWV…FPFI, VPSA…ILFY, VFFI…PISL, IFIL…NVPW, and AIFH…LTIV.

It belongs to the ATPase A chain family. F-type ATPases have 2 components, CF(1) - the catalytic core - and CF(0) - the membrane proton channel. CF(1) has five subunits: alpha(3), beta(3), gamma(1), delta(1), epsilon(1). CF(0) has three main subunits: a(1), b(2) and c(9-12). The alpha and beta chains form an alternating ring which encloses part of the gamma chain. CF(1) is attached to CF(0) by a central stalk formed by the gamma and epsilon chains, while a peripheral stalk is formed by the delta and b chains.

The protein resides in the cell membrane. Its function is as follows. Key component of the proton channel; it plays a direct role in the translocation of protons across the membrane. The sequence is that of ATP synthase subunit a from Buchnera aphidicola subsp. Schizaphis graminum (strain Sg).